The chain runs to 321 residues: Glutaminase (321 aa).

Substrate-binding residues include Ser-69, Asn-120, Glu-165, Asn-172, Tyr-196, Tyr-248, and Val-266.

This sequence belongs to the glutaminase family. As to quaternary structure, homotetramer.

It catalyses the reaction L-glutamine + H2O = L-glutamate + NH4(+). In Bacteroides thetaiotaomicron (strain ATCC 29148 / DSM 2079 / JCM 5827 / CCUG 10774 / NCTC 10582 / VPI-5482 / E50), this protein is Glutaminase.